A 541-amino-acid chain; its full sequence is Atlastin-3 (541 aa).

The segment at 1-22 (MLSPQRTAAVASRGAGDAMENG) is disordered. The N-terminal hypervariable region (HVR) stretch occupies residues 1 to 25 (MLSPQRTAAVASRGAGDAMENGKPG). At 1–445 (MLSPQRTAAV…NVFSTFRTPA (445 aa)) the chain is on the cytoplasmic side. The 249-residue stretch at 57–305 (DLDVVVVSVA…LIPYVLNPSK (249 aa)) folds into the GB1/RHD3-type G domain. GDP contacts are provided by arginine 70, lysine 71, glycine 72, lysine 73, serine 74, phenylalanine 75, and arginine 109. Residue aspartate 142 participates in Mg(2+) binding. GDP is bound by residues arginine 213, aspartate 214, valine 272, and serine 275. Residues 343–434 (MLQATAEANN…YENFCKHNGS (92 aa)) are 3HB (three-helix bundle) domain. Lysine 391 is subject to N6-acetyllysine. A helical transmembrane segment spans residues 446-466 (VLFTGIAALYIASGFTGFIGL). A topological domain (lumenal) is located at residue glutamate 467. Residues 468 to 488 (VVAQLFNCMVGLLLIALLTWG) traverse the membrane as a helical segment. Residues 489 to 541 (YIRYSGQYRELGGAIDSGAAYVLEQASSHIGNSTQAAVRDAVVGRPPADKKSQ) are Cytoplasmic-facing.

Belongs to the TRAFAC class dynamin-like GTPase superfamily. GB1/RHD3 GTPase family. GB1 subfamily. As to quaternary structure, monomeric and homodimeric. The homodimer, transiently formed by two molecules on opposing membranes, is the active form mediating ER membrane fusion. Interacts with ZFYVE27; both proteins are involved in endoplasmic reticulum tubular network organization. Interacts with REEP5; both proteins are involved in endoplasmic reticulum tubular network organization. As to expression, expressed in cardiomyocytes (at protein level).

Its subcellular location is the endoplasmic reticulum membrane. It carries out the reaction GTP + H2O = GDP + phosphate + H(+). Atlastin-3 (ATL3) is a membrane-anchored GTPase that mediates the GTP-dependent fusion of endoplasmic reticulum (ER) membranes, maintaining the continuous ER network. It facilitates the formation of three-way junctions where ER tubules intersect. Two atlastin-3 on neighboring ER tubules bind GTP and form loose homodimers through the GB1/RHD3-type G domains and 3HB regions. Upon GTP hydrolysis, the 3HB regions tighten, pulling the membranes together to drive their fusion. After fusion, the homodimer disassembles upon release of inorganic phosphate (Pi). Subsequently, GDP dissociates, resetting the monomers to a conformation ready for a new fusion cycle. The protein is Atlastin-3 of Mus musculus (Mouse).